Reading from the N-terminus, the 186-residue chain is Serine hydrolase RBBP9 (186 aa).

An involved in binding to RB1 region spans residues 63–67 (LHCDE). Catalysis depends on charge relay system residues Ser-75, Asp-138, and His-165.

This sequence belongs to the RBBP9 family. As to quaternary structure, interacts with RB1; the interaction disrupts RB1 binding to E2F1. Interacts with RBL1 and RBL2. In terms of tissue distribution, expressed at higher levels in tumor tissues such as carcinoma.

It catalyses the reaction valacyclovir + H2O = acyclovir + L-valine + H(+). With respect to regulation, inhibited by the natural product emetine produced by the ipecac root. Serine hydrolase. Catalyzes the hydrolytic activation of amino acid ester of the antiviral prodrug valacyclovir to its corresponding active drug, acyclovir. May negatively regulate basal or autocrine TGF-beta signaling by suppressing SMAD2-SMAD3 phosphorylation. May play a role in the transformation process due to its capacity to confer resistance to the growth-inhibitory effects of TGF-beta through interaction with RB1 and the subsequent displacement of E2F1. This chain is Serine hydrolase RBBP9, found in Homo sapiens (Human).